The chain runs to 315 residues: MRIAFAGTPEFARVALRQLLDAGFDVPLVLTQPDRPAGRGLKLQASAVKALAVERGLAVTQPRSLRLDGKYPDDASAAREALEAAQLDAMVVAAYGLILPAWVLKLPARGCLNIHASLLPRWRGAAPIHRAIEAGDTETGITIMQMDEGLDTGDMLLSERESIRSDDSTATLHDRLSALGGRLIVEALEAAACGGLVRRPQPAEGVTYAHKIDKAEAAIDWSRPAEEIERRVRAFDPFPGASFQQAGETVKLWRAAVAPQRGAPGTVLSAAEGVLRVACGDLSLDLLQLQRPGGRRVGARDFLAVRSTLQVGATL.

117–120 contributes to the (6S)-5,6,7,8-tetrahydrofolate binding site; the sequence is SLLP.

The protein belongs to the Fmt family.

It catalyses the reaction L-methionyl-tRNA(fMet) + (6R)-10-formyltetrahydrofolate = N-formyl-L-methionyl-tRNA(fMet) + (6S)-5,6,7,8-tetrahydrofolate + H(+). Attaches a formyl group to the free amino group of methionyl-tRNA(fMet). The formyl group appears to play a dual role in the initiator identity of N-formylmethionyl-tRNA by promoting its recognition by IF2 and preventing the misappropriation of this tRNA by the elongation apparatus. In Methylibium petroleiphilum (strain ATCC BAA-1232 / LMG 22953 / PM1), this protein is Methionyl-tRNA formyltransferase.